The following is a 509-amino-acid chain: Maturase K (509 aa).

Belongs to the intron maturase 2 family. MatK subfamily.

It is found in the plastid. The protein localises to the chloroplast. Functionally, usually encoded in the trnK tRNA gene intron. Probably assists in splicing its own and other chloroplast group II introns. The protein is Maturase K of Portulaca oleracea (Common purslane).